Here is a 121-residue protein sequence, read N- to C-terminus: Large ribosomal subunit protein bL19 (121 aa).

Belongs to the bacterial ribosomal protein bL19 family.

Its function is as follows. This protein is located at the 30S-50S ribosomal subunit interface and may play a role in the structure and function of the aminoacyl-tRNA binding site. This Chlamydia muridarum (strain MoPn / Nigg) protein is Large ribosomal subunit protein bL19 (rplS).